The sequence spans 444 residues: Maintenance of mitochondrial morphology protein 1 (444 aa).

Positions Met1–Arg16 are enriched in polar residues. A disordered region spans residues Met1–Gly20. Residues Met1–Gly107 lie on the Lumenal side of the membrane. Residues Leu108 to Phe128 traverse the membrane as a helical segment. Residues Ser129–Glu444 lie on the Cytoplasmic side of the membrane. The segment at Gly136 to Ser157 is disordered. Low complexity predominate over residues Ser142 to Ser157. Residues Ser204 to Pro418 enclose the SMP-LTD domain. Residues Lys425–Glu444 form a disordered region. The span at Asn426–Glu444 shows a compositional bias: basic and acidic residues.

This sequence belongs to the MMM1 family. As to quaternary structure, homodimer. Component of the ER-mitochondria encounter structure (ERMES) or MDM complex, composed of MMM1, MDM10, MDM12 and MDM34. An MMM1 homodimer associates with one molecule of MDM12 on each side in a pairwise head-to-tail manner, and the SMP-LTD domains of MMM1 and MDM12 generate a continuous hydrophobic tunnel for phospholipid trafficking.

The protein localises to the endoplasmic reticulum membrane. Its function is as follows. Component of the ERMES/MDM complex, which serves as a molecular tether to connect the endoplasmic reticulum (ER) and mitochondria. Components of this complex are involved in the control of mitochondrial shape and protein biogenesis, and function in nonvesicular lipid trafficking between the ER and mitochondria. The MDM12-MMM1 subcomplex functions in the major beta-barrel assembly pathway that is responsible for biogenesis of all outer membrane beta-barrel proteins, and acts in a late step after the SAM complex. The MDM10-MDM12-MMM1 subcomplex further acts in the TOM40-specific pathway after the action of the MDM12-MMM1 complex. Essential for establishing and maintaining the structure of mitochondria and maintenance of mtDNA nucleoids. This Eremothecium gossypii (strain ATCC 10895 / CBS 109.51 / FGSC 9923 / NRRL Y-1056) (Yeast) protein is Maintenance of mitochondrial morphology protein 1.